A 156-amino-acid chain; its full sequence is Arginine repressor (156 aa).

Belongs to the ArgR family.

It is found in the cytoplasm. Its pathway is amino-acid biosynthesis; L-arginine biosynthesis [regulation]. Its function is as follows. Regulates arginine biosynthesis genes. In Erwinia tasmaniensis (strain DSM 17950 / CFBP 7177 / CIP 109463 / NCPPB 4357 / Et1/99), this protein is Arginine repressor.